The following is an 87-amino-acid chain: MSERNQRKVYQGRVVSDKMDKTITVVVETYKKHSLYGKRVKYSKKFKAHDENNQAKIGDIVKIMETRPLSATKRFRLVEVVEEAVII.

It belongs to the universal ribosomal protein uS17 family. Part of the 30S ribosomal subunit.

Its function is as follows. One of the primary rRNA binding proteins, it binds specifically to the 5'-end of 16S ribosomal RNA. This Bacillus licheniformis (strain ATCC 14580 / DSM 13 / JCM 2505 / CCUG 7422 / NBRC 12200 / NCIMB 9375 / NCTC 10341 / NRRL NRS-1264 / Gibson 46) protein is Small ribosomal subunit protein uS17.